The primary structure comprises 509 residues: Ribonuclease Y (509 aa).

The helical transmembrane segment at 3–23 (WILYVILPAVCIILGWTIRWL) threads the bilayer. One can recognise a KH domain in the interval 199 to 284 (TVSTVSLPSD…EIVQKVTREI (86 aa)). The 94-residue stretch at 325 to 418 (VLQHSKEVAI…VQIADAISAA (94 aa)) folds into the HD domain.

This sequence belongs to the RNase Y family.

The protein localises to the cell membrane. Functionally, endoribonuclease that initiates mRNA decay. The polypeptide is Ribonuclease Y (Treponema denticola (strain ATCC 35405 / DSM 14222 / CIP 103919 / JCM 8153 / KCTC 15104)).